A 123-amino-acid polypeptide reads, in one-letter code: Class II hydrophobin 2 (123 aa).

The first 16 residues, 1 to 16 (MRSFLVIATLAVGAFG), serve as a signal peptide directing secretion. 4 cysteine pairs are disulfide-bonded: C22-C70, C32-C61, C33-C45, and C71-C82.

The protein belongs to the cerato-ulmin hydrophobin family. In terms of assembly, homodimer. Homodimers further self-assemble to form highly ordered films at water-air interfaces through intermolecular interactions.

The protein localises to the secreted. The protein resides in the cell wall. In terms of biological role, aerial growth, conidiation, and dispersal of filamentous fungi in the environment rely upon a capability of their secreting small amphipathic proteins called hydrophobins (HPBs) with low sequence identity. Class I can self-assemble into an outermost layer of rodlet bundles on aerial cell surfaces, conferring cellular hydrophobicity that supports fungal growth, development and dispersal; whereas Class II form highly ordered films at water-air interfaces through intermolecular interactions but contribute nothing to the rodlet structure. Hyd2 is a class II hydrophobin that plays probably a role in intraspecific signaling or hyphal fusion. Not necessary for root adhesion and colonization. Might play an essential role since no deletion mutants could be obtained. This Bionectria ochroleuca (Gliocladium roseum) protein is Class II hydrophobin 2.